Reading from the N-terminus, the 434-residue chain is Putative B3 domain-containing protein Os04g0347400 (434 aa).

DNA-binding regions (TF-B3) lie at residues S27–T124, K150–N246, and W326–E432.

It is found in the nucleus. This is Putative B3 domain-containing protein Os04g0347400 from Oryza sativa subsp. japonica (Rice).